Here is a 303-residue protein sequence, read N- to C-terminus: Probable 5-dehydro-4-deoxyglucarate dehydratase (303 aa).

Belongs to the DapA family.

The enzyme catalyses 5-dehydro-4-deoxy-D-glucarate + H(+) = 2,5-dioxopentanoate + CO2 + H2O. The protein operates within carbohydrate acid metabolism; D-glucarate degradation; 2,5-dioxopentanoate from D-glucarate: step 2/2. This is Probable 5-dehydro-4-deoxyglucarate dehydratase from Ectopseudomonas mendocina (strain ymp) (Pseudomonas mendocina).